A 339-amino-acid chain; its full sequence is tRNA pseudouridine synthase D (339 aa).

Asp80 functions as the Nucleophile in the catalytic mechanism. One can recognise a TRUD domain in the interval Gly155–Pro311.

Belongs to the pseudouridine synthase TruD family.

The catalysed reaction is uridine(13) in tRNA = pseudouridine(13) in tRNA. Functionally, responsible for synthesis of pseudouridine from uracil-13 in transfer RNAs. This is tRNA pseudouridine synthase D from Haemophilus influenzae (strain 86-028NP).